We begin with the raw amino-acid sequence, 209 residues long: Guanylate kinase (209 aa).

The Guanylate kinase-like domain maps to 8–186 (GVLYIVSAPS…ALQDLVAITR (179 aa)). An ATP-binding site is contributed by 15–22 (APSGAGKT).

It belongs to the guanylate kinase family.

Its subcellular location is the cytoplasm. It carries out the reaction GMP + ATP = GDP + ADP. Its function is as follows. Essential for recycling GMP and indirectly, cGMP. The chain is Guanylate kinase from Thiobacillus denitrificans (strain ATCC 25259 / T1).